A 211-amino-acid polypeptide reads, in one-letter code: Protein FAM167A (211 aa).

2 disordered regions span residues 1–30 (MSVP…DHLR) and 56–108 (EEQT…GKLE). Positions 120 to 153 (LRKELMEMRLQDQQLARQLMRLRSDIHKLKIEQT) form a coiled coil.

It belongs to the FAM167 (SEC) family.

The protein is Protein FAM167A (FAM167A) of Bos taurus (Bovine).